We begin with the raw amino-acid sequence, 246 residues long: uncharacterized protein (246 aa).

Belongs to the BtpA family.

This is an uncharacterized protein from Archaeoglobus fulgidus (strain ATCC 49558 / DSM 4304 / JCM 9628 / NBRC 100126 / VC-16).